The following is a 965-amino-acid chain: Probable serine/threonine-protein kinase DDB_G0291516 (965 aa).

Residues 114-170 form a disordered region; sequence KDSQKELLPSPQQLTPPTSLPSLPLLPLPQAPEQNEEQQLTQPPSPPSIPPPPPQKK. Composition is skewed to low complexity over residues 119–136 and 144–155; these read ELLPSPQQLTPPTSLPSL and APEQNEEQQLTQ. Over residues 156-168 the composition is skewed to pro residues; that stretch reads PPSPPSIPPPPPQ. ANK repeat units lie at residues 271-301 and 310-339; these read KGETPLHSLIINNSESCLKKLVIAKINHMGI and LNKNLLAHAIEKGDIDVIRLVLIGGCPLKM. The 281-residue stretch at 459 to 739 folds into the Protein kinase domain; that stretch reads IDFHTQIGSA…NVKAIKKEFL (281 aa). Residues 465–473 and Lys-486 contribute to the ATP site; that span reads IGSAGNASV. Asp-587 serves as the catalytic Proton acceptor. A helical transmembrane segment spans residues 653–673; the sequence is IYSLGIILWELVCVAMTGTYI. N-linked (GlcNAc...) asparagine glycans are attached at residues Asn-760, Asn-765, Asn-905, Asn-909, Asn-910, Asn-914, Asn-934, and Asn-938. The span at 881–940 shows a compositional bias: low complexity; that stretch reads NINKNKNNNNNNNNNNNNNNNINNNNTFNNSTNNNSNDNINIPYDFNNNNNNNNNSCNNS. Positions 881–942 are disordered; that stretch reads NINKNKNNNN…NNNSCNNSKK (62 aa).

It belongs to the protein kinase superfamily. Ser/Thr protein kinase family.

It localises to the membrane. The enzyme catalyses L-seryl-[protein] + ATP = O-phospho-L-seryl-[protein] + ADP + H(+). It catalyses the reaction L-threonyl-[protein] + ATP = O-phospho-L-threonyl-[protein] + ADP + H(+). This chain is Probable serine/threonine-protein kinase DDB_G0291516, found in Dictyostelium discoideum (Social amoeba).